Reading from the N-terminus, the 106-residue chain is MNNERLMLKGIFLGAAAGAALSLLHKPTRQACGMRWLTCKHKLSLYKSNPELLKNTVITKVDEAKKLARTLSKEVDFVNQQVKELKKTTPQVMELVQETKEHFSKK.

Positions 1–31 (MNNERLMLKGIFLGAAAGAALSLLHKPTRQA) are cleaved as a signal peptide. Residues 57-89 (VITKVDEAKKLARTLSKEVDFVNQQVKELKKTT) are a coiled coil.

This is an uncharacterized protein from Bacillus subtilis (strain 168).